The following is a 265-amino-acid chain: Hydroxyethylthiazole kinase (265 aa).

Substrate is bound at residue Met50. 2 residues coordinate ATP: Arg125 and Thr171. Gly198 lines the substrate pocket.

It belongs to the Thz kinase family. Mg(2+) is required as a cofactor.

It catalyses the reaction 5-(2-hydroxyethyl)-4-methylthiazole + ATP = 4-methyl-5-(2-phosphooxyethyl)-thiazole + ADP + H(+). It participates in cofactor biosynthesis; thiamine diphosphate biosynthesis; 4-methyl-5-(2-phosphoethyl)-thiazole from 5-(2-hydroxyethyl)-4-methylthiazole: step 1/1. In terms of biological role, catalyzes the phosphorylation of the hydroxyl group of 4-methyl-5-beta-hydroxyethylthiazole (THZ). The sequence is that of Hydroxyethylthiazole kinase from Salmonella choleraesuis (strain SC-B67).